Reading from the N-terminus, the 117-residue chain is Minor capsid protein VP2 (117 aa).

Belongs to the lagovirus VP2 protein family. In terms of assembly, homooligomer. The portal-like structure consists in 12 copies of VP2. Interacts with capsid protein VP1.

Its subcellular location is the virion. The protein resides in the host cytoplasm. Minor structural protein that forms a portal-like structure at a unique three-fold axis of symmetry, following binding to the host receptor. The channel formed by VP2 may allow the delivery of the viral genome through the host endosomal membrane. In Oryctolagus cuniculus (Rabbit), this protein is Minor capsid protein VP2.